The chain runs to 55 residues: Large ribosomal subunit protein bL33 (55 aa).

Belongs to the bacterial ribosomal protein bL33 family.

In Caulobacter vibrioides (strain ATCC 19089 / CIP 103742 / CB 15) (Caulobacter crescentus), this protein is Large ribosomal subunit protein bL33.